The primary structure comprises 474 residues: Serine/threonine-protein kinase VRK3 (474 aa).

Residues 41–58 are compositionally biased toward polar residues; the sequence is HVSSFQGSKRGLNSSFET. Positions 41 to 152 are disordered; it reads HVSSFQGSKR…SRVTTSLEAL (112 aa). Residues 49–64 carry the Nuclear localization signal motif; it reads KRGLNSSFETSPKKVK. 6 positions are modified to phosphoserine: Ser-54, Ser-55, Ser-59, Ser-82, Ser-83, and Ser-90. Low complexity predominate over residues 88-101; it reads TLSSSERSKGSGSR. The span at 107 to 149 shows a compositional bias: polar residues; sequence SSPQKTRKSPQVTRGSPQKTSCSPQKTRQSPQTLKRSRVTTSL. Ser-108 is subject to Phosphoserine; by CDK5. 2 positions are modified to phosphoserine: Ser-115 and Ser-122. The 292-residue stretch at 166–457 folds into the Protein kinase domain; that stretch reads WKLKSFQTRD…MLRNNLEALL (292 aa).

This sequence belongs to the protein kinase superfamily. CK1 Ser/Thr protein kinase family. VRK subfamily. In terms of assembly, interacts with DUSP3. Interacts with RAN. Interacts with HSP70/HSPA1A. Post-translationally, phosphorylated at Ser-108 by CDK5; leading to protection of the cell against H2O2-induced apoptosis. Ubiquitinated by RNF144A.

The protein localises to the nucleus. It is found in the cytoplasm. It catalyses the reaction L-seryl-[protein] + ATP = O-phospho-L-seryl-[protein] + ADP + H(+). Its function is as follows. Plays a role in the regulation of the cell cycle by phosphorylating the nuclear envelope protein barrier-to-autointegration factor/BAF that is required for disassembly and reassembly, respectively, of the nuclear envelope during mitosis. Under normal physiological conditions, negatively regulates ERK activity along with VHR/DUSP3 phosphatase in the nucleus, causing timely and transient action of ERK. Stress conditions activate CDK5 which phosphorylates VRK3 to increase VHR phosphatase activity and suppress prolonged ERK activation that causes cell death. For example, upon glutamate induction, promotes nuclear localization of HSP70/HSPA1A to inhibit ERK activation via VHR/DUSP3 phosphatase. This is Serine/threonine-protein kinase VRK3 (VRK3) from Homo sapiens (Human).